The sequence spans 34 residues: Non-cysteinic peptide Bs 10 (34 aa).

The segment at 1-34 (VTMGYIKDGDGKKIAKKKNKNGRKHVEIDLNKVG) is disordered. Residues 14–23 (IAKKKNKNGR) show a composition bias toward basic residues. A compositionally biased stretch (basic and acidic residues) spans 24 to 34 (KHVEIDLNKVG).

As to expression, expressed by the venom gland.

It localises to the secreted. This chain is Non-cysteinic peptide Bs 10, found in Hottentotta tamulus sindicus (Scorpion).